The chain runs to 98 residues: Small ribosomal subunit protein bS6 (98 aa).

Belongs to the bacterial ribosomal protein bS6 family.

Its function is as follows. Binds together with bS18 to 16S ribosomal RNA. The chain is Small ribosomal subunit protein bS6 from Staphylococcus aureus (strain NCTC 8325 / PS 47).